The primary structure comprises 230 residues: 7-cyano-7-deazaguanine synthase (230 aa).

14 to 24 (LSGGLDSTTTL) lines the ATP pocket. Residues C194, C204, C207, and C210 each contribute to the Zn(2+) site.

Belongs to the QueC family. It depends on Zn(2+) as a cofactor.

It carries out the reaction 7-carboxy-7-deazaguanine + NH4(+) + ATP = 7-cyano-7-deazaguanine + ADP + phosphate + H2O + H(+). Its pathway is purine metabolism; 7-cyano-7-deazaguanine biosynthesis. Functionally, catalyzes the ATP-dependent conversion of 7-carboxy-7-deazaguanine (CDG) to 7-cyano-7-deazaguanine (preQ(0)). This is 7-cyano-7-deazaguanine synthase from Vesicomyosocius okutanii subsp. Calyptogena okutanii (strain HA).